The primary structure comprises 371 residues: Repetitive proline-rich cell wall protein 2 (371 aa).

The signal sequence occupies residues 1-22 (MASSNLLVLLLFALFAIPRGLA). Tandem repeats lie at residues 32–36 (PPVYK), 37–41 (PPVEK), 42–46 (PPVYK), 47–51 (PPVEK), 52–56 (PPVYK), 57–61 (PPVEK), 62–66 (PPVYK), 67–71 (PPVEK), 72–76 (PPVYK), 77–81 (PPVEK), 82–86 (PPVYK), 87–91 (PPVEK), 92–96 (PPVYK), 97–101 (PPVEK), 102–106 (PPVYK), 107–111 (PPVEK), 112–116 (PPVYK), 117–121 (PPVEK), 122–126 (PPVYK), 127–131 (PPVEK), 132–136 (PPVYK), 137–141 (PPVEK), 142–146 (PPVYK), 147–151 (PPVEK), 152–156 (PPVYK), 157–161 (PPVEK), 162–166 (PPVYK), 167–171 (PPVEK), 172–176 (PPVYK), 177–181 (PPVEK), 182–186 (PPVYK), 187–191 (PPVEK), 192–196 (PPVYK), 197–201 (PPVEK), 202–206 (PPVYK), 207–211 (PPVEK), 212–216 (PPVYK), 217–221 (PPVEK), 222–226 (PPVYK), 227–231 (PPVEK), 232–236 (PPIYK), 237–241 (PPVEK), 242–246 (PPVYK), 247–251 (PPVEK), 252–256 (PPVYK), 257–261 (PPVEK), 262–266 (PPIYK), 267–271 (PPVEK), 272–276 (PPVYK), 277–281 (PPVEK), 282–286 (PPVYK), 287–291 (PPVEK), 292–296 (PPVYK), 297–301 (PPVEK), 302–306 (PPVYK), 307–311 (PPVEK), 312–316 (PPVYK), 317–321 (PPVYK), 322–326 (PPVYK), 327–331 (PPVEK), 332–336 (PPVYK), 337–341 (PPVYK), 342–346 (PPVEK), 347–351 (PPVYK), 352–356 (PPVYK), and 357–361 (PPVEK). The segment at 32–366 (PPVYKPPVEK…PPVEKPPVYG (335 aa)) is 67 X 5 AA approximate tandem repeats of P-P-[IV]-[EY]-K. The segment at 49-317 (VEKPPVYKPP…PVEKPPVYKP (269 aa)) is disordered. Positions 339-371 (VYKPPVEKPPVYKPPVYKPPVEKPPVYGPPHHP) are disordered. One copy of the 67; approximate repeat lies at 362–366 (PPVYG).

It belongs to the plant proline-rich protein superfamily. ENOD12 family. In terms of tissue distribution, expressed in hypocotyls, roots and mature root nodules.

It localises to the secreted. The protein resides in the cell wall. Its function is as follows. This is a developmentally regulated putative cell wall protein. This chain is Repetitive proline-rich cell wall protein 2 (PRP2), found in Medicago truncatula (Barrel medic).